Reading from the N-terminus, the 476-residue chain is Aspartyl/glutamyl-tRNA(Asn/Gln) amidotransferase subunit B (476 aa).

The protein belongs to the GatB/GatE family. GatB subfamily. As to quaternary structure, heterotrimer of A, B and C subunits.

The catalysed reaction is L-glutamyl-tRNA(Gln) + L-glutamine + ATP + H2O = L-glutaminyl-tRNA(Gln) + L-glutamate + ADP + phosphate + H(+). It catalyses the reaction L-aspartyl-tRNA(Asn) + L-glutamine + ATP + H2O = L-asparaginyl-tRNA(Asn) + L-glutamate + ADP + phosphate + 2 H(+). In terms of biological role, allows the formation of correctly charged Asn-tRNA(Asn) or Gln-tRNA(Gln) through the transamidation of misacylated Asp-tRNA(Asn) or Glu-tRNA(Gln) in organisms which lack either or both of asparaginyl-tRNA or glutaminyl-tRNA synthetases. The reaction takes place in the presence of glutamine and ATP through an activated phospho-Asp-tRNA(Asn) or phospho-Glu-tRNA(Gln). The chain is Aspartyl/glutamyl-tRNA(Asn/Gln) amidotransferase subunit B from Shouchella clausii (strain KSM-K16) (Alkalihalobacillus clausii).